The chain runs to 788 residues: Integrin beta-6 (788 aa).

The first 21 residues, 1-21, serve as a signal peptide directing secretion; sequence MGIELLCLFFLFLGRNDHVQG. A PSI domain is found at 22 to 71; sequence GCALGGAETCEDCLLIGPQCAWCAQENFTHPSGVGERCDTPANLLAKGCQ. The Extracellular segment spans residues 22-709; it reads GCALGGAETC…KDCPKPPNIP (688 aa). Cystine bridges form between Cys-23–Cys-41, Cys-31–Cys-454, Cys-34–Cys-59, Cys-44–Cys-70, Cys-197–Cys-204, Cys-252–Cys-293, Cys-394–Cys-406, Cys-426–Cys-452, Cys-456–Cys-476, Cys-467–Cys-479, Cys-481–Cys-490, Cys-492–Cys-519, Cys-502–Cys-517, Cys-511–Cys-522, Cys-524–Cys-537, Cys-539–Cys-560, Cys-544–Cys-558, Cys-552–Cys-563, and Cys-565–Cys-574. 2 N-linked (GlcNAc...) asparagine glycosylation sites follow: Asn-48 and Asn-97. Positions 131-371 constitute a VWFA domain; it reads YPVDLYYLMD…QLIISAYEEL (241 aa). Residues Asp-140, Ser-142, and Ser-144 each contribute to the Mg(2+) site. 4 residues coordinate Ca(2+): Ser-144, Asp-147, Asp-148, and Glu-179. Positions 235, 237, 239, and 240 each coordinate Ca(2+). Glu-240 contributes to the Mg(2+) binding site. Asn-260 is a glycosylation site (N-linked (GlcNAc...) asparagine). Ca(2+)-binding residues include Asp-271 and Lys-355. Residues Asn-387 and Asn-396 are each glycosylated (N-linked (GlcNAc...) asparagine). 4 consecutive I-EGF domains span residues 456–491, 492–538, 539–575, and 576–615; these read CQKE…PRCE, CGED…PYCQ, CDNF…EYCN, and CTTS…PTCE. Asn-463 and Asn-471 each carry an N-linked (GlcNAc...) asparagine glycan. Asn-541 is a glycosylation site (N-linked (GlcNAc...) asparagine). The N-linked (GlcNAc...) asparagine glycan is linked to Asn-575. 9 disulfides stabilise this stretch: Cys-576/Cys-599, Cys-583/Cys-597, Cys-591/Cys-602, Cys-604/Cys-614, Cys-617/Cys-620, Cys-624/Cys-670, Cys-630/Cys-649, Cys-633/Cys-645, and Cys-678/Cys-702. A helical transmembrane segment spans residues 710–730; the sequence is MIMLGVSLAILLIGVVLLCIW. The tract at residues 731–758 is interaction with HAX1; that stretch reads KLLVSFHDRKEVAKFEAERSKAKWQTGT. Over 731–788 the chain is Cytoplasmic; that stretch reads KLLVSFHDRKEVAKFEAERSKAKWQTGTNPLYRGSTSTFKNVTYKHREKQKVDLSTDC.

It belongs to the integrin beta chain family. Heterodimer of an alpha and a beta subunit. Interacts with FLNB. Interacts with HAX1. ITGAV:ITGB6 interacts with FBN1. ITGAV:ITGB6 interacts with TGFB1. As to quaternary structure, (Microbial infection) Integrin ITGAV:ITGB6 interacts with coxsackievirus A9, coxsackievirus B1 capsid proteins. In terms of assembly, (Microbial infection) Integrin ITGAV:ITGB6 interacts with herpes simplex virus-1/HHV-1 gH:gL proteins.

Its subcellular location is the cell membrane. The protein localises to the cell junction. It localises to the focal adhesion. Integrin alpha-V:beta-6 (ITGAV:ITGB6) is a receptor for fibronectin and cytotactin. It recognizes the sequence R-G-D in its ligands. Internalization of integrin alpha-V/beta-6 via clathrin-mediated endocytosis promotes carcinoma cell invasion. ITGAV:ITGB6 acts as a receptor for fibrillin-1 (FBN1) and mediates R-G-D-dependent cell adhesion to FBN1. Integrin alpha-V:beta-6 (ITGAV:ITGB6) mediates R-G-D-dependent release of transforming growth factor beta-1 (TGF-beta-1) from regulatory Latency-associated peptide (LAP), thereby playing a key role in TGF-beta-1 activation. Functionally, (Microbial infection) Integrin ITGAV:ITGB6 acts as a receptor for Coxsackievirus A9 and Coxsackievirus B1. Its function is as follows. (Microbial infection) Integrin ITGAV:ITGB6 acts as a receptor for Herpes simplex virus-1/HHV-1. This chain is Integrin beta-6 (ITGB6), found in Homo sapiens (Human).